Consider the following 380-residue polypeptide: Ubiquitin-like protein 7 (380 aa).

One can recognise a Ubiquitin-like domain in the interval 18–98 (TPKSILRLPE…VLRKSWPEPD (81 aa)). Residues 200–313 (APMPGTDSSS…SSGVQSGTPI (114 aa)) form a disordered region. Residues 206-221 (DSSSRSMPSSSYRDMP) show a composition bias toward low complexity. Residue serine 230 is modified to Phosphoserine. Composition is skewed to low complexity over residues 240-253 (TRSTPSSSTPSSRP) and 270-293 (SELATALALASTPESSSHTPTPGT). Positions 294–313 (QGHSSGTSPMSSGVQSGTPI) are enriched in polar residues. The 45-residue stretch at 333 to 377 (SLQSQWQPQLQQLRDMGIQDDELSLRALQATGGDIQAALELIFAG) folds into the UBA domain.

In terms of assembly, binds ubiquitin. Interacts with MAVS; this interaction enhances TRIM21-dependent 'Lys-27'-linked polyubiquitination of MAVS. Post-translationally, deubiquitinated by OTUD4 which stabilizes UBL7 expression. As to expression, ubiquitous. Highly expressed in heart, skeletal muscle, testis, thyroid and adrenal gland.

Its function is as follows. Interferon-stimulated protein that positively regulates RNA virus-triggered innate immune signaling. Mechanistically, promotes 'Lys-27'-linked polyubiquitination of MAVS through TRIM21 leading to enhanced the IFN signaling pathway. This is Ubiquitin-like protein 7 (UBL7) from Homo sapiens (Human).